The sequence spans 315 residues: Lipoyl synthase (315 aa).

The [4Fe-4S] cluster site is built by Cys62, Cys67, Cys73, Cys88, Cys92, Cys95, and Ser302. Positions 74–291 (FGKGTATFMI…ETEALAMGFK (218 aa)) constitute a Radical SAM core domain.

Belongs to the radical SAM superfamily. Lipoyl synthase family. [4Fe-4S] cluster serves as cofactor.

It is found in the cytoplasm. It catalyses the reaction [[Fe-S] cluster scaffold protein carrying a second [4Fe-4S](2+) cluster] + N(6)-octanoyl-L-lysyl-[protein] + 2 oxidized [2Fe-2S]-[ferredoxin] + 2 S-adenosyl-L-methionine + 4 H(+) = [[Fe-S] cluster scaffold protein] + N(6)-[(R)-dihydrolipoyl]-L-lysyl-[protein] + 4 Fe(3+) + 2 hydrogen sulfide + 2 5'-deoxyadenosine + 2 L-methionine + 2 reduced [2Fe-2S]-[ferredoxin]. It participates in protein modification; protein lipoylation via endogenous pathway; protein N(6)-(lipoyl)lysine from octanoyl-[acyl-carrier-protein]: step 2/2. Functionally, catalyzes the radical-mediated insertion of two sulfur atoms into the C-6 and C-8 positions of the octanoyl moiety bound to the lipoyl domains of lipoate-dependent enzymes, thereby converting the octanoylated domains into lipoylated derivatives. The chain is Lipoyl synthase from Aromatoleum aromaticum (strain DSM 19018 / LMG 30748 / EbN1) (Azoarcus sp. (strain EbN1)).